The following is an 873-amino-acid chain: Potassium voltage-gated channel subfamily KQT member 3 (873 aa).

The tract at residues 1 to 41 is disordered; the sequence is MGLKARRAAGAAGGGGGEGGGGGGGAANPAGGDSAVAGDEE. Residues 1–121 are Cytoplasmic-facing; sequence MGLKARRAAG…IYDALERPRG (121 aa). Residues 11–26 are compositionally biased toward gly residues; it reads AAGGGGGEGGGGGGGA. Threonine 82 is subject to Phosphothreonine. Residues 122-144 form a helical membrane-spanning segment; that stretch reads WALLYHALVFLIVLGCLILAVLT. Over 145–154 the chain is Extracellular; that stretch reads TFKEYETVSG. A helical membrane pass occupies residues 155 to 176; sequence DWLLLLETFAIFIFGAEFALRI. Residues 177-194 are Cytoplasmic-facing; it reads WAAGCCCRYKGWRGRLKF. Residues 195–214 traverse the membrane as a helical segment; sequence ARKPLCMLDIFVLIASVPVV. Residues 215–226 lie on the Extracellular side of the membrane; sequence AVGNQGNVLATS. Residues 227 to 245 form a helical; Voltage-sensor membrane-spanning segment; sequence LRSLRFLQILRMLRMDRRG. Arginine 244 is an a 1,2-diacyl-sn-glycero-3-phospho-(1D-myo-inositol-4,5-bisphosphate) binding site. At 246–257 the chain is on the cytoplasmic side; it reads GTWKLLGSAICA. The chain crosses the membrane as a helical span at residues 258–283; sequence HSKELITAWYIGFLTLILSSFLVYLV. Lysine 260 provides a ligand contact to a 1,2-diacyl-sn-glycero-3-phospho-(1D-myo-inositol-4,5-bisphosphate). Residues 284 to 303 lie on the Extracellular side of the membrane; that stretch reads EKDVPEMDAQGEEMKEEFET. The pore-forming intramembrane region spans 304-316; the sequence is YADALWWGLITLA. Positions 317–322 match the Selectivity filter motif; sequence TIGYGD. The Extracellular segment spans residues 317–327; sequence TIGYGDKTPKT. Residues 328 to 354 form a helical membrane-spanning segment; the sequence is WEGRLIAATFSLIGVSFFALPAGILGS. At 355–873 the chain is on the cytoplasmic side; it reads GLALKVQEQH…SIWTPSNKPT (519 aa). Residues 357-538 form a mediates interaction with calmodulin region; sequence ALKVQEQHRQ…RLYKKKFKET (182 aa). Lysine 367 lines the a 1,2-diacyl-sn-glycero-3-phospho-(1D-myo-inositol-4,5-bisphosphate) pocket. Disordered stretches follow at residues 575–603, 723–742, and 766–873; these read PGPP…PRNE, RGGP…GSTY, and ELQG…NKPT. 3 stretches are compositionally biased toward polar residues: residues 588 to 601, 725 to 741, and 844 to 873; these read KGSA…QSPR, GPSS…SGST, and DPFT…NKPT.

It belongs to the potassium channel family. KQT (TC 1.A.1.15) subfamily. Kv7.3/KCNQ3 sub-subfamily. As to quaternary structure, heterotetramer with KCNQ2; forms heterotetrameric M-channel responsible for the native M-current. Interacts with calmodulin; the interaction is calcium-independent, constitutive and participates in the proper assembly of a functional M-channel. Heteromultimer with KCNQ5. May associate with KCNE2. Interacts with IQCJ-SCHIP1. Interacts (via the pore module) with SLC5A3/SMIT1; forms a coregulatory complex that alters ion selectivity, voltage dependence and gating kinetics of the channel. Post-translationally, KCNQ2/KCNQ3 are ubiquitinated by NEDD4L. Ubiquitination leads to protein degradation. Degradation induced by NEDD4L is inhibited by USP36. Expressed in brain and sympathetic ganglia. In brain, expressed in cortex, hippocampus and at much lower levels in cerebellum. In sympathetic ganglia, expressed at approximately equal levels in both superior cervical ganglia and prevertebral ganglia.

It localises to the cell membrane. It catalyses the reaction K(+)(in) = K(+)(out). The enzyme catalyses Rb(+)(in) = Rb(+)(out). The catalysed reaction is Cs(+)(in) = Cs(+)(out). It carries out the reaction Na(+)(in) = Na(+)(out). With respect to regulation, phosphatidylinositol-4,5-bisphosphate (PIP2) potentiates the activation of KCNQ channels by enhancing the electro-mechanical coupling of the voltage-sensing domain (VSD) and the pore-forming domain (PD). In the closed state of the channel, PIP2 is anchored at the S2-S3 loop; upon channel activation, PIP2 interacts with the S4-S5 linker and is involved in channel gating. Calcium suppresses KCNQ2-KCNQ3 channel currents, with calcium-bound calmodulin inducing a change in channel configuration which leads to the reduction of channel affinity for PIP2 and subsequent current suppression. M-channel is blocked by XE991. Its function is as follows. Pore-forming subunit of the voltage-gated potassium (Kv) M-channel which is responsible for the M-current, a key controller of neuronal excitability. M-channel is composed of pore-forming subunits KCNQ2 and KCNQ3 assembled as heterotetramers, each subunit containing a voltage sensing domain (VSD) and a pore-forming domain (PD). The native M-current has a slowly activating and deactivating potassium conductance which plays a critical role in determining the subthreshold electrical excitability of neurons as well as the responsiveness to synaptic inputs. M-channel is selectively permeable in vitro to other cations besides potassium, in decreasing order of affinity K(+) &gt; Rb(+) &gt; Cs(+) &gt; Na(+). M-channel association with SLC5A3/SMIT1 alters channel ion selectivity, increasing Na(+) and Cs(+) permeation relative to K(+). Suppressed by activation of M1 muscarinic acetylcholine receptors. KCNQ3 also associates with KCNQ5 to form a functional channel in vitro and may also contribute to the M-current in brain. The sequence is that of Potassium voltage-gated channel subfamily KQT member 3 from Rattus norvegicus (Rat).